Reading from the N-terminus, the 401-residue chain is Large ribosomal subunit protein uL3 (401 aa).

Residues 1–22 (MSHRKFSAPRHGHMGFTPKKRS) form a disordered region.

Belongs to the universal ribosomal protein uL3 family.

It is found in the cytoplasm. In terms of biological role, the L3 protein is a component of the large subunit of cytoplasmic ribosomes. The chain is Large ribosomal subunit protein uL3 (rpl-3) from Caenorhabditis elegans.